Reading from the N-terminus, the 625-residue chain is Sphingomyelin phosphodiesterase (625 aa).

The segment at 1–20 is disordered; sequence MPRHGVSPGQGLPRSGREQA. A signal peptide spans 1–40; that stretch reads MPRHGVSPGQGLPRSGREQASDRSLGAPCLRLLWLGLALA. A Saposin B-type domain is found at 81–165; the sequence is WNLTCPTCKG…LLGSSCGHWD (85 aa). A glycan (N-linked (GlcNAc...) asparagine) is linked at Asn82. 3 cysteine pairs are disulfide-bonded: Cys85–Cys161, Cys88–Cys153, and Cys116–Cys127. A glycan (N-linked (GlcNAc...) asparagine) is linked at Asn171. Residues Asp202 and His204 each coordinate Zn(2+). Cystine bridges form between Cys217/Cys222 and Cys223/Cys246. Residues Asp274 and Asn314 each contribute to the Zn(2+) site. Residues Asn331 and Asn391 are each glycosylated (N-linked (GlcNAc...) asparagine). Cysteines 381 and 427 form a disulfide. Zn(2+) contacts are provided by His421, His453, and His455. Asn499 carries an N-linked (GlcNAc...) asparagine glycan. Position 504 is a phosphoserine (Ser504). A glycan (N-linked (GlcNAc...) asparagine) is linked at Asn516. Intrachain disulfides connect Cys580–Cys584 and Cys590–Cys603.

This sequence belongs to the acid sphingomyelinase family. Monomer. Interacts with SORT1; the interaction is required for SMPD1 targeting to lysosomes. Requires Zn(2+) as cofactor. Post-translationally, proteolytically processed. Mature lysosomal form arises from C-terminal proteolytic processing of pro-sphingomyelin phosphodiesterase. In terms of processing, both lysosomal and secreted forms are glycosylated but they show a differential pattern of glycosylation. Phosphorylated at Ser-504 by PRKCD upon stress stimuli. Phosphorylation is required for secretion. Post-translationally, this form is generated following cleavage by CASP7 in the extracellular milieu. It shows increased activity.

It is found in the lysosome. It localises to the lipid droplet. Its subcellular location is the secreted. The protein resides in the extracellular space. The enzyme catalyses a sphingomyelin + H2O = phosphocholine + an N-acylsphing-4-enine + H(+). It carries out the reaction N-(octadecanoyl)-sphing-4-enine-1-phosphocholine + H2O = N-octadecanoylsphing-4-enine + phosphocholine + H(+). It catalyses the reaction a 1,2-diacyl-sn-glycero-3-phosphocholine + H2O = phosphocholine + a 1,2-diacyl-sn-glycerol + H(+). The catalysed reaction is 1,2-dihexadecanoyl-sn-glycero-3-phosphocholine + H2O = 1,2-dihexadecanoyl-sn-glycerol + phosphocholine + H(+). Its activity is regulated as follows. Hydrolysis of liposomal sphingomyelin is stimulated by incorporation of diacylglycerol (DAG), ceramide and free fatty acids into the liposomal membranes. Phosphatidylcholine hydrolysis is inhibited by incorporation of cholesterol, ceramide, DAG, monoacylglycerol and fatty acids. Its function is as follows. Converts sphingomyelin to ceramide. Exists as two enzymatic forms that arise from alternative trafficking of a single protein precursor, one that is targeted to the endolysosomal compartment, whereas the other is released extracellularly. However, in response to various forms of stress, lysosomal exocytosis may represent a major source of the secretory form. Functionally, in the lysosomes, converts sphingomyelin to ceramide. Plays an important role in the export of cholesterol from the intraendolysosomal membranes. Also has phospholipase C activities toward 1,2-diacylglycerolphosphocholine and 1,2-diacylglycerolphosphoglycerol. Modulates stress-induced apoptosis through the production of ceramide. When secreted, modulates cell signaling with its ability to reorganize the plasma membrane by converting sphingomyelin to ceramide. Secreted form is increased in response to stress and inflammatory mediators such as IL1B, IFNG or TNF as well as upon infection with bacteria and viruses. Produces the release of ceramide in the outer leaflet of the plasma membrane playing a central role in host defense. Ceramide reorganizes these rafts into larger signaling platforms that are required to internalize bacteria, induce apoptosis and regulate the cytokine response in infected cells. In wounded cells, the lysosomal form is released extracellularly in the presence of Ca(2+) and promotes endocytosis and plasma membrane repair. In terms of biological role, this form is generated following cleavage by CASP7 in the extracellular milieu in response to bacterial infection. It shows increased ability to convert sphingomyelin to ceramide and promotes plasma membrane repair. Plasma membrane repair by ceramide counteracts the action of gasdermin-D (GSDMD) perforin (PRF1) pores that are formed in response to bacterial infection. The sequence is that of Sphingomyelin phosphodiesterase (SMPD1) from Bos taurus (Bovine).